A 225-amino-acid polypeptide reads, in one-letter code: Thylakoid lumenal 17.9 kDa protein, chloroplastic (225 aa).

Its subcellular location is the plastid. The protein resides in the chloroplast thylakoid lumen. This chain is Thylakoid lumenal 17.9 kDa protein, chloroplastic, found in Arabidopsis thaliana (Mouse-ear cress).